Reading from the N-terminus, the 245-residue chain is Phosphoribosylaminoimidazole-succinocarboxamide synthase (245 aa).

This sequence belongs to the SAICAR synthetase family.

The enzyme catalyses 5-amino-1-(5-phospho-D-ribosyl)imidazole-4-carboxylate + L-aspartate + ATP = (2S)-2-[5-amino-1-(5-phospho-beta-D-ribosyl)imidazole-4-carboxamido]succinate + ADP + phosphate + 2 H(+). The protein operates within purine metabolism; IMP biosynthesis via de novo pathway; 5-amino-1-(5-phospho-D-ribosyl)imidazole-4-carboxamide from 5-amino-1-(5-phospho-D-ribosyl)imidazole-4-carboxylate: step 1/2. This chain is Phosphoribosylaminoimidazole-succinocarboxamide synthase, found in Acaryochloris marina (strain MBIC 11017).